The primary structure comprises 445 residues: GTPase Der (445 aa).

EngA-type G domains lie at phenylalanine 2–glutamate 166 and isoleucine 182–tryptophan 355. GTP is bound by residues glycine 8 to serine 15, aspartate 55 to tyrosine 59, asparagine 118 to aspartate 121, glycine 188 to serine 195, aspartate 235 to methionine 239, and asparagine 300 to aspartate 303. The KH-like domain maps to lysine 356–glutamate 440.

This sequence belongs to the TRAFAC class TrmE-Era-EngA-EngB-Septin-like GTPase superfamily. EngA (Der) GTPase family. In terms of assembly, associates with the 50S ribosomal subunit.

GTPase that plays an essential role in the late steps of ribosome biogenesis. This chain is GTPase Der, found in Sulfurihydrogenibium sp. (strain YO3AOP1).